The following is a 126-amino-acid chain: Large ribosomal subunit protein bL19 (126 aa).

Belongs to the bacterial ribosomal protein bL19 family.

This protein is located at the 30S-50S ribosomal subunit interface and may play a role in the structure and function of the aminoacyl-tRNA binding site. This Nitrobacter winogradskyi (strain ATCC 25391 / DSM 10237 / CIP 104748 / NCIMB 11846 / Nb-255) protein is Large ribosomal subunit protein bL19.